We begin with the raw amino-acid sequence, 507 residues long: ATP synthase subunit alpha, chloroplastic (507 aa).

170 to 177 contacts ATP; it reads GDRQTGKT.

Belongs to the ATPase alpha/beta chains family. In terms of assembly, F-type ATPases have 2 components, CF(1) - the catalytic core - and CF(0) - the membrane proton channel. CF(1) has five subunits: alpha(3), beta(3), gamma(1), delta(1), epsilon(1). CF(0) has four main subunits: a, b, b' and c.

It is found in the plastid. The protein localises to the chloroplast thylakoid membrane. The enzyme catalyses ATP + H2O + 4 H(+)(in) = ADP + phosphate + 5 H(+)(out). Functionally, produces ATP from ADP in the presence of a proton gradient across the membrane. The alpha chain is a regulatory subunit. The polypeptide is ATP synthase subunit alpha, chloroplastic (Cucumis sativus (Cucumber)).